Here is a 70-residue protein sequence, read N- to C-terminus: Consomatin Mrc3 (70 aa).

The N-terminal stretch at 1–22 is a signal peptide; sequence MQTAYWVMVMMMVWITAPLSEG. A propeptide spanning residues 23–55 is cleaved from the precursor; sequence GKLNDVIRGLVPDDVTPKRILQSLISRRRFDGR. The cysteines at positions 62 and 67 are disulfide-linked. Trp-64 carries the post-translational modification D-tryptophan. Residue Pro-68 is modified to 4-hydroxyproline. A Tyrosine amide modification is found at Tyr-69.

It belongs to the conotoxin C superfamily. Consomatin family. In terms of tissue distribution, expressed by the venom duct.

The protein localises to the secreted. Its function is as follows. Moderately activates human somatostatin receptors (SSTR) with a preferential activation of SSTR1 and SSTR4. In vivo, does not cause behavioral changes in mice within a few minutes of intracranial injection, but causes a progressive loss of movement thereafter. Four to five hours after injection, mice recover, even with the highest dose tested. Shows antinociception and antihyperalgesia activities in two mouse models of acute pain, most probably by acting outside the central nervous system. The chain is Consomatin Mrc3 from Conus mercator (Trader cone).